Reading from the N-terminus, the 312-residue chain is Malate dehydrogenase 1 (312 aa).

NAD(+) is bound by residues 11–16 and Asp35; that span reads GAGQIG. The substrate site is built by Arg86 and Arg92. NAD(+) contacts are provided by residues Asn99 and 122 to 124; that span reads ITN. Asn124 and Arg155 together coordinate substrate. The Proton acceptor role is filled by His179.

This sequence belongs to the LDH/MDH superfamily. MDH type 3 family.

It catalyses the reaction (S)-malate + NAD(+) = oxaloacetate + NADH + H(+). Functionally, catalyzes the reversible oxidation of malate to oxaloacetate. The polypeptide is Malate dehydrogenase 1 (Anaeromyxobacter dehalogenans (strain 2CP-C)).